The chain runs to 385 residues: Dual-specificity RNA methyltransferase RlmN (385 aa).

The active-site Proton acceptor is Glu113. The 233-residue stretch at 120-352 folds into the Radical SAM core domain; the sequence is VGRAGALCVS…NRAGYASPIR (233 aa). An intrachain disulfide couples Cys127 to Cys363. The [4Fe-4S] cluster site is built by Cys134, Cys138, and Cys141. S-adenosyl-L-methionine is bound by residues 189–190, Ser221, 243–245, and Asn320; these read GE and SLH. The S-methylcysteine intermediate role is filled by Cys363.

It belongs to the radical SAM superfamily. RlmN family. Requires [4Fe-4S] cluster as cofactor.

It localises to the cytoplasm. The enzyme catalyses adenosine(2503) in 23S rRNA + 2 reduced [2Fe-2S]-[ferredoxin] + 2 S-adenosyl-L-methionine = 2-methyladenosine(2503) in 23S rRNA + 5'-deoxyadenosine + L-methionine + 2 oxidized [2Fe-2S]-[ferredoxin] + S-adenosyl-L-homocysteine. It carries out the reaction adenosine(37) in tRNA + 2 reduced [2Fe-2S]-[ferredoxin] + 2 S-adenosyl-L-methionine = 2-methyladenosine(37) in tRNA + 5'-deoxyadenosine + L-methionine + 2 oxidized [2Fe-2S]-[ferredoxin] + S-adenosyl-L-homocysteine. Its function is as follows. Specifically methylates position 2 of adenine 2503 in 23S rRNA and position 2 of adenine 37 in tRNAs. m2A2503 modification seems to play a crucial role in the proofreading step occurring at the peptidyl transferase center and thus would serve to optimize ribosomal fidelity. This is Dual-specificity RNA methyltransferase RlmN from Phenylobacterium zucineum (strain HLK1).